Consider the following 171-residue polypeptide: Transcription antitermination protein NusB (171 aa).

This sequence belongs to the NusB family.

Functionally, involved in transcription antitermination. Required for transcription of ribosomal RNA (rRNA) genes. Binds specifically to the boxA antiterminator sequence of the ribosomal RNA (rrn) operons. The sequence is that of Transcription antitermination protein NusB from Brucella ovis (strain ATCC 25840 / 63/290 / NCTC 10512).